The sequence spans 234 residues: Ubiquinone biosynthesis O-methyltransferase (234 aa).

Residues R40, G59, D80, and M123 each contribute to the S-adenosyl-L-methionine site.

It belongs to the methyltransferase superfamily. UbiG/COQ3 family.

It catalyses the reaction a 3-demethylubiquinol + S-adenosyl-L-methionine = a ubiquinol + S-adenosyl-L-homocysteine + H(+). The catalysed reaction is a 3-(all-trans-polyprenyl)benzene-1,2-diol + S-adenosyl-L-methionine = a 2-methoxy-6-(all-trans-polyprenyl)phenol + S-adenosyl-L-homocysteine + H(+). The protein operates within cofactor biosynthesis; ubiquinone biosynthesis. O-methyltransferase that catalyzes the 2 O-methylation steps in the ubiquinone biosynthetic pathway. The chain is Ubiquinone biosynthesis O-methyltransferase from Coxiella burnetii (strain Dugway 5J108-111).